The following is a 373-amino-acid chain: Chaperone protein DnaJ (373 aa).

One can recognise a J domain in the interval 5–70; the sequence is CYYEVLEVSR…EKRSRYDRFG (66 aa). The CR-type zinc finger occupies 134-212; sequence GTEVELNIPV…CRGAGYVRKQ (79 aa). Zn(2+)-binding residues include C147, C150, C164, C167, C186, C189, C200, and C203. CXXCXGXG motif repeat units follow at residues 147–154, 164–171, 186–193, and 200–207; these read CDTCEGSG, CSHCGGRG, CPACNGRG, and CSECRGAG.

Belongs to the DnaJ family. As to quaternary structure, homodimer. It depends on Zn(2+) as a cofactor.

The protein resides in the cytoplasm. In terms of biological role, participates actively in the response to hyperosmotic and heat shock by preventing the aggregation of stress-denatured proteins and by disaggregating proteins, also in an autonomous, DnaK-independent fashion. Unfolded proteins bind initially to DnaJ; upon interaction with the DnaJ-bound protein, DnaK hydrolyzes its bound ATP, resulting in the formation of a stable complex. GrpE releases ADP from DnaK; ATP binding to DnaK triggers the release of the substrate protein, thus completing the reaction cycle. Several rounds of ATP-dependent interactions between DnaJ, DnaK and GrpE are required for fully efficient folding. Also involved, together with DnaK and GrpE, in the DNA replication of plasmids through activation of initiation proteins. This is Chaperone protein DnaJ from Maridesulfovibrio salexigens (strain ATCC 14822 / DSM 2638 / NCIMB 8403 / VKM B-1763) (Desulfovibrio salexigens).